The chain runs to 347 residues: NADH-ubiquinone oxidoreductase chain 2 (347 aa).

The next 11 helical transmembrane spans lie at 1-21, 25-45, 59-79, 96-116, 122-142, 145-165, 178-198, 200-220, 242-262, 274-294, and 325-345; these read MNPL…SIIL, HWFM…PVLM, YFLT…INLM, LLIT…FWVP, VSLQ…LAVM, IFAS…IMIG, IMAY…IYNP, LMLL…MMFM, VLMM…GFMP, NSVI…FFYM, and LLAP…MFIL.

Belongs to the complex I subunit 2 family. Core subunit of respiratory chain NADH dehydrogenase (Complex I) which is composed of 45 different subunits. Interacts with TMEM242.

The protein resides in the mitochondrion inner membrane. The enzyme catalyses a ubiquinone + NADH + 5 H(+)(in) = a ubiquinol + NAD(+) + 4 H(+)(out). Core subunit of the mitochondrial membrane respiratory chain NADH dehydrogenase (Complex I) which catalyzes electron transfer from NADH through the respiratory chain, using ubiquinone as an electron acceptor. Essential for the catalytic activity and assembly of complex I. This is NADH-ubiquinone oxidoreductase chain 2 from Myosorex kihaulei (Kihaule's mouse shrew).